Consider the following 946-residue polypeptide: Probable inactive ATP-dependent zinc metalloprotease FTSHI 1, chloroplastic (946 aa).

The N-terminal 54 residues, 1 to 54 (MASIDNVFSLGTRFSIPENPKRSILKHATTSSFSARTQTRWRAPILRRSFTVLC), are a transit peptide targeting the chloroplast. 3 helical membrane passes run 289–309 (AVIAAAAVVVGGFLASAVFAV), 320–340 (VVWPIAKPFLKLFVGVFLGVL), and 369–389 (VASSLEMLKPILLVVMTMVLL). 470–477 (GPPGCGKT) provides a ligand contact to ATP.

It in the N-terminal section; belongs to the AAA ATPase family. In the C-terminal section; belongs to the peptidase M41 family. In terms of assembly, oligomer.

The protein localises to the plastid. The protein resides in the chloroplast inner membrane. Functions in chloroplast biogenesis and chloroplast division. Required for plastid development during embryogenesis. Might be involved in chaperone functions or play a structural role in the thylakoid FtsH complex. This chain is Probable inactive ATP-dependent zinc metalloprotease FTSHI 1, chloroplastic, found in Arabidopsis thaliana (Mouse-ear cress).